An 857-amino-acid chain; its full sequence is Leucine--tRNA ligase (857 aa).

The short motif at 42–52 (PYPSGRLHMGH) is the 'HIGH' region element. The short motif at 617–621 (KMSKS) is the 'KMSKS' region element. Residue K620 coordinates ATP.

The protein belongs to the class-I aminoacyl-tRNA synthetase family.

It localises to the cytoplasm. The enzyme catalyses tRNA(Leu) + L-leucine + ATP = L-leucyl-tRNA(Leu) + AMP + diphosphate. This is Leucine--tRNA ligase from Vibrio parahaemolyticus serotype O3:K6 (strain RIMD 2210633).